We begin with the raw amino-acid sequence, 185 residues long: Large ribosomal subunit protein uL22 (185 aa).

The protein belongs to the universal ribosomal protein uL22 family. In terms of assembly, part of the 50S ribosomal subunit.

Functionally, this protein binds specifically to 23S rRNA. It makes multiple contacts with different domains of the 23S rRNA in the assembled 50S subunit and ribosome. Its function is as follows. The globular domain of the protein is located near the polypeptide exit tunnel on the outside of the subunit, while an extended beta-hairpin is found that lines the wall of the exit tunnel in the center of the 70S ribosome. This Pyrobaculum neutrophilum (strain DSM 2338 / JCM 9278 / NBRC 100436 / V24Sta) (Thermoproteus neutrophilus) protein is Large ribosomal subunit protein uL22.